We begin with the raw amino-acid sequence, 358 residues long: Peptide chain release factor 1 (358 aa).

The residue at position 233 (glutamine 233) is an N5-methylglutamine.

Belongs to the prokaryotic/mitochondrial release factor family. Post-translationally, methylated by PrmC. Methylation increases the termination efficiency of RF1.

The protein resides in the cytoplasm. In terms of biological role, peptide chain release factor 1 directs the termination of translation in response to the peptide chain termination codons UAG and UAA. In Lysinibacillus sphaericus (strain C3-41), this protein is Peptide chain release factor 1.